The sequence spans 110 residues: UPF0060 membrane protein Nmul_A0351 (110 aa).

4 consecutive transmembrane segments (helical) span residues 7–27 (LFLF…PYLW), 33–53 (SAWL…LLTL), 63–83 (AAYG…VDGV), and 87–107 (AWDM…MFGP).

Belongs to the UPF0060 family.

It is found in the cell inner membrane. The polypeptide is UPF0060 membrane protein Nmul_A0351 (Nitrosospira multiformis (strain ATCC 25196 / NCIMB 11849 / C 71)).